A 265-amino-acid polypeptide reads, in one-letter code: MTIRIAIAGPRGRMGREAVALVQQTDHFELAAVIDRRYDGQNLAEIDGFSGVNAPIYTDAARCFAEVKPDVLIDLTTPEAGKRHTELALRYGVRPVVGTTGFTPEDIERLTKLAEEKEIGAIIAPNFAVGAVLMMKFARMAAKYFTDVEIIELHHDQKLDAPSGTALKTAQLIAEVRPSKKQGHPNEKETLAGARGAEYDGIPIHSVRLPGFVAHQEVIFGGNGQTLTIRHDSFDRRSFMSGVKLAVETVMHLHTLVYGLEHILE.

9–14 lines the NAD(+) pocket; that stretch reads GPRGRM. Residue Arg37 participates in NADP(+) binding. Residues 98–100 and 124–127 contribute to the NAD(+) site; these read GTT and APNF. The active-site Proton donor/acceptor is His154. His155 is a binding site for (S)-2,3,4,5-tetrahydrodipicolinate. The Proton donor role is filled by Lys158. Residue 164 to 165 coordinates (S)-2,3,4,5-tetrahydrodipicolinate; the sequence is GT.

This sequence belongs to the DapB family.

It is found in the cytoplasm. It catalyses the reaction (S)-2,3,4,5-tetrahydrodipicolinate + NAD(+) + H2O = (2S,4S)-4-hydroxy-2,3,4,5-tetrahydrodipicolinate + NADH + H(+). It carries out the reaction (S)-2,3,4,5-tetrahydrodipicolinate + NADP(+) + H2O = (2S,4S)-4-hydroxy-2,3,4,5-tetrahydrodipicolinate + NADPH + H(+). Its pathway is amino-acid biosynthesis; L-lysine biosynthesis via DAP pathway; (S)-tetrahydrodipicolinate from L-aspartate: step 4/4. Functionally, catalyzes the conversion of 4-hydroxy-tetrahydrodipicolinate (HTPA) to tetrahydrodipicolinate. The sequence is that of 4-hydroxy-tetrahydrodipicolinate reductase from Geobacillus kaustophilus (strain HTA426).